The sequence spans 388 residues: Putative 8-amino-7-oxononanoate synthase (388 aa).

Arginine 23 serves as a coordination point for substrate. 110 to 111 (GY) contacts pyridoxal 5'-phosphate. Histidine 135 lines the substrate pocket. Pyridoxal 5'-phosphate is bound by residues serine 182, 207–210 (DDAH), and 238–241 (TLSK). The residue at position 241 (lysine 241) is an N6-(pyridoxal phosphate)lysine. Threonine 355 provides a ligand contact to substrate.

Belongs to the class-II pyridoxal-phosphate-dependent aminotransferase family. BioF subfamily. In terms of assembly, homodimer. The cofactor is pyridoxal 5'-phosphate.

It catalyses the reaction 6-carboxyhexanoyl-[ACP] + L-alanine + H(+) = (8S)-8-amino-7-oxononanoate + holo-[ACP] + CO2. The protein operates within cofactor biosynthesis; biotin biosynthesis. Its function is as follows. Catalyzes the decarboxylative condensation of pimeloyl-[acyl-carrier protein] and L-alanine to produce 8-amino-7-oxononanoate (AON), [acyl-carrier protein], and carbon dioxide. This Thermodesulfovibrio yellowstonii (strain ATCC 51303 / DSM 11347 / YP87) protein is Putative 8-amino-7-oxononanoate synthase (bioF).